The chain runs to 1160 residues: Nck-associated protein 1 homolog (1160 aa).

It belongs to the HEM-1/HEM-2 family. In terms of assembly, part of a Scar/WAVE complex containing brk1, scrA, abiA, pirA and napA.

In terms of biological role, involved in regulation of actin and microtubule organization. Involved in cell adhesion. The polypeptide is Nck-associated protein 1 homolog (napA) (Dictyostelium discoideum (Social amoeba)).